The sequence spans 205 residues: Outer-membrane lipoprotein LolB (205 aa).

An N-terminal signal peptide occupies residues 1-17; the sequence is MFLRHVIVFSLIALLTG. A lipid anchor (N-palmitoyl cysteine) is attached at Cys-18. Residue Cys-18 is the site of S-diacylglycerol cysteine attachment.

Belongs to the LolB family. Monomer.

Its subcellular location is the cell outer membrane. Functionally, plays a critical role in the incorporation of lipoproteins in the outer membrane after they are released by the LolA protein. The protein is Outer-membrane lipoprotein LolB of Pseudomonas savastanoi pv. phaseolicola (strain 1448A / Race 6) (Pseudomonas syringae pv. phaseolicola (strain 1448A / Race 6)).